The chain runs to 398 residues: MTVGSQVVHDEPTILIAKLHALEPRLKDKNDHQARKECLRISKALTSQVEEPDNVAVSLAFSPVIALSARVAIDLNLFALVVQHGPVASASLAALSGAEELLIIRIMRLMSTAHLVEETAARTWSATRITKAMAREEIAAGHRFNSQVVVPAIQSAPDFFRENGYSCPTDTRKGLVQYALKTEQTAFDYIISNPSMLKDFNLFMGNAMGARKFWLDWFPVQSKILDGADPEKALIVDVGGGRGHDLIAFHKQFPNAGRLVVEDLPAVLEPLGEFSAFIEQVEHDFLSGEQPVKGARAYLCHHIMHDWPDSYCLRILEGIALAMTPGYSKLLLHEIIVPEQGACDFQAQSDITAMVCNGGMERTKQQFHTLLKAAGLSVVQIWESADEGGDGIVEAMKV.

S-adenosyl-L-methionine is bound at residue D263. Residue H305 is the Proton acceptor of the active site.

It belongs to the class I-like SAM-binding methyltransferase superfamily. Cation-independent O-methyltransferase family.

It functions in the pathway secondary metabolite biosynthesis. It participates in alkaloid biosynthesis. Its pathway is mycotoxin biosynthesis. O-methyltransferase; part of the gene cluster that mediates the biosynthesis of penigequinolones, potent insecticidal alkaloids that contain a highly modified 10-carbon prenyl group. The first stage is catalyzed by the nonribosomal peptide synthetase penN that condenses anthranilic acid and O-methyl-L-tyrosine to produce 4'-methoxycyclopeptin. 4'-methoxycyclopeptin is then converted to 4'-methoxydehydrocyclopeptin by the ketoglutarate-dependent dioxygenase penM through dehydrogenation to form a double bond between C-alpha and C-beta of the O-methyltyrosine side chain. PenM also converts its first product methoxydehydrocyclopeptin to 4'-methoxycyclopenin. The following conversion of 4'methoxycyclopenin into 4'-methoxyviridicatin is catalyzed by the cyclopenase penL. 4'-methoxyviridicatin is the precursor of quinolone natural products, and is further converted to quinolinone B. The prenyltransferase penI then catalyzes the canonical Friedel-Crafts alkylation of quinolinone B with dimethylallyl cation to yield dimethylallyl quinolone, which is subjected to FAD-dependent dehydrogenation by the FAD-linked oxidoreductase penH to yield conjugated aryl diene. The delta(3') double bond then serves as the site of the second alkylation with DMAPP catalyzed by the prenyltransferase penG to yield a carbenium ion intermediate, which can be attacked by H(2)O to yield a styrenyl quinolone containing a C3'-hydroxyprenyl chain, or undergo cyclization to yield yaequinolones J1 and J2. The conversion of the styrenyl quinolone into the tetrahydrofuran-containing yaequinolone C is performed by the FAD-dependent monooxygenase penE and involves epoxidation of the terminal C7'-C8' olefin, followed by epoxide ring opening initiated by the C3' hydroxyl group. The predicted cysteine hydrolase penJ acts as an epoxide hydrolase that enhances the rate of the 5-exo-tet cyclization step, increasing the yield of yaequinolone C. PenF catalyzes the cationic rearrangement of the epoxide formed by penE (before ring opening to produce yaequinolone C) into yaequinolone D. Finally, the short-chain dehydrogenase/reductase (SDR)-like reductase penD, catalyzes both the dehydration of yaequinolone D and the reduction of the resulting oxonium to yield penigequinolone. The sequence is that of O-methyltransferase penC from Penicillium thymicola.